A 93-amino-acid chain; its full sequence is Large ribosomal subunit protein uL23 (93 aa).

The protein belongs to the universal ribosomal protein uL23 family. Part of the 50S ribosomal subunit. Contacts protein L29, and trigger factor when it is bound to the ribosome.

Its function is as follows. One of the early assembly proteins it binds 23S rRNA. One of the proteins that surrounds the polypeptide exit tunnel on the outside of the ribosome. Forms the main docking site for trigger factor binding to the ribosome. The chain is Large ribosomal subunit protein uL23 from Wolinella succinogenes (strain ATCC 29543 / DSM 1740 / CCUG 13145 / JCM 31913 / LMG 7466 / NCTC 11488 / FDC 602W) (Vibrio succinogenes).